Reading from the N-terminus, the 639-residue chain is Exocyst complex component EXO70E2 (639 aa).

This sequence belongs to the EXO70 family. In terms of assembly, component of the exocyst complex and of the exocyst-positive organelle (EXPO). Interacts with SEC6, SEC10A and SEC10B. In terms of tissue distribution, expressed in roots, in the root-hair zone, both in root hair and nonhair cells.

Its subcellular location is the secreted. The protein localises to the extracellular exosome. The protein resides in the cell membrane. It is found in the cytoplasm. It localises to the endomembrane system. Functionally, influences the subcellular localization patterns of other exocyst complex proteins (e.g. SEC5A, SEC15A, SEC15B and EXO84B) leading to their recruitment to exocyst, well-defined large punctate structures throughout the cytosol. Essential component for the formation and the recruitment of exocyst subunits to the exocyst-positive organelle (EXPO), a secreted double membrane structure also called extracellular exosome, that acts as a sequester for cytosolic proteins to release them into the apoplast. The protein is Exocyst complex component EXO70E2 of Arabidopsis thaliana (Mouse-ear cress).